Here is a 225-residue protein sequence, read N- to C-terminus: Cytidylate kinase (225 aa).

Position 11–19 (11–19) interacts with ATP; the sequence is GPAGVGKST.

It belongs to the cytidylate kinase family. Type 1 subfamily.

The protein localises to the cytoplasm. It carries out the reaction CMP + ATP = CDP + ADP. The catalysed reaction is dCMP + ATP = dCDP + ADP. This is Cytidylate kinase from Lawsonia intracellularis (strain PHE/MN1-00).